The following is a 183-amino-acid chain: ATP synthase subunit b, chloroplastic (183 aa).

A helical transmembrane segment spans residues 27-49; the sequence is LATNLINLTVVVGVLIFFGKGVL.

It belongs to the ATPase B chain family. F-type ATPases have 2 components, F(1) - the catalytic core - and F(0) - the membrane proton channel. F(1) has five subunits: alpha(3), beta(3), gamma(1), delta(1), epsilon(1). F(0) has four main subunits: a(1), b(1), b'(1) and c(10-14). The alpha and beta chains form an alternating ring which encloses part of the gamma chain. F(1) is attached to F(0) by a central stalk formed by the gamma and epsilon chains, while a peripheral stalk is formed by the delta, b and b' chains.

Its subcellular location is the plastid. The protein resides in the chloroplast thylakoid membrane. Functionally, f(1)F(0) ATP synthase produces ATP from ADP in the presence of a proton or sodium gradient. F-type ATPases consist of two structural domains, F(1) containing the extramembraneous catalytic core and F(0) containing the membrane proton channel, linked together by a central stalk and a peripheral stalk. During catalysis, ATP synthesis in the catalytic domain of F(1) is coupled via a rotary mechanism of the central stalk subunits to proton translocation. In terms of biological role, component of the F(0) channel, it forms part of the peripheral stalk, linking F(1) to F(0). This chain is ATP synthase subunit b, chloroplastic, found in Lolium perenne (Perennial ryegrass).